The primary structure comprises 62 residues: Agnoprotein (62 aa).

Over 1–23 (MVLRRLSRQASVKVRRSWTESKK) the chain is Cytoplasmic. The chain crosses the membrane as a helical; Signal-anchor for type II membrane protein span at residues 24 to 40 (TAQRLFVFVLELLLQFC). Topologically, residues 41–62 (EGEDTVDGKRKKPERLTEKPES) are extracellular.

It belongs to the polyomaviruses agnoprotein family. In terms of assembly, homooligomer. Interacts with VP1. Interacts with large T antigen; this interaction may impact upon the activity of T-antigen on the control of viral gene transcription and replication. Interacts with small t antigen. Interacts with host CBX5; this interaction induces the dissociation of CBX5 from LBR, resulting in destabilization of the nuclear envelope. Phosphorylated by host kinase. Phosphorylation segregates agnoprotein in cytoplasm, whereas unphosphorylated agnoprotein migrate to the nucleus.

It is found in the host cytoplasm. The protein resides in the host nucleus membrane. It localises to the host rough endoplasmic reticulum membrane. Its subcellular location is the host cell membrane. Alters the structure of the nuclear envelope by interacting with host CBX5 and disrupting CBX5 association with LBR. Involved in the perinuclear-nuclear localization of the capsid protein VP1 during virion assembly and maturation. Plays an important role in the release of progeny virions from infected cells and in viral propagation, probably by acting as a viral ionic channel in the host plasma membrane. Allows influx of extracellular calcium ions in the host cell. May contribute to viral genome transcription and translation of viral late proteins. The sequence is that of Agnoprotein from Simian virus 40 (SV40).